The primary structure comprises 407 residues: Protein arginine N-methyltransferase 2 (407 aa).

An RMT2 domain is found at 186-407 (TAADQATYLK…YYYHPEIRFA (222 aa)). S-adenosyl-L-methionine-binding positions include Tyr193, Met223, 246–251 (FGMGII), 267–269 (EAH), 294–295 (WQ), and Asp315.

The protein belongs to the class I-like SAM-binding methyltransferase superfamily. RMT2 methyltransferase family. Monomer.

Its subcellular location is the cytoplasm. It localises to the nucleus. S-adenosyl-L-methionine-dependent protein-arginine N-methyltransferase that methylates the delta-nitrogen atom of arginine residues to form N5-methylarginine (type IV) in target proteins. Monomethylates ribosomal protein L12. The chain is Protein arginine N-methyltransferase 2 from Kluyveromyces lactis (strain ATCC 8585 / CBS 2359 / DSM 70799 / NBRC 1267 / NRRL Y-1140 / WM37) (Yeast).